Consider the following 294-residue polypeptide: MSNRLPVLPQYLLPKKALTIFAGKVAGAKAGRVTTGLIRWFIGKYGVNMTEAANPDIRSYASFNEFFTRALRSGARPLADDPYICPVDGAISQCGTIQKDQIFQAKGHSYSTTALVGGDHELAAQFDNGSFATVYLSPRDYHRIHMPCDGRLMRMIYVPGALFSVNPTTARGVPNLFARNERVVCVFEGAAGPFVLVLVGATIVGSMQTTWHGVVNATRNGNIREWHYDKQYLGLKKGEEMGRFLLGSTVVMLFPHDTLSFNPSWTAERPVRLGESMAQTVAAITPPAMQADVS.

Catalysis depends on charge relay system; for autoendoproteolytic cleavage activity residues D88, H145, and S248. The active-site Schiff-base intermediate with substrate; via pyruvic acid; for decarboxylase activity is the S248. S248 carries the post-translational modification Pyruvic acid (Ser); by autocatalysis.

This sequence belongs to the phosphatidylserine decarboxylase family. PSD-B subfamily. Prokaryotic type I sub-subfamily. Heterodimer of a large membrane-associated beta subunit and a small pyruvoyl-containing alpha subunit. Requires pyruvate as cofactor. Post-translationally, is synthesized initially as an inactive proenzyme. Formation of the active enzyme involves a self-maturation process in which the active site pyruvoyl group is generated from an internal serine residue via an autocatalytic post-translational modification. Two non-identical subunits are generated from the proenzyme in this reaction, and the pyruvate is formed at the N-terminus of the alpha chain, which is derived from the carboxyl end of the proenzyme. The autoendoproteolytic cleavage occurs by a canonical serine protease mechanism, in which the side chain hydroxyl group of the serine supplies its oxygen atom to form the C-terminus of the beta chain, while the remainder of the serine residue undergoes an oxidative deamination to produce ammonia and the pyruvoyl prosthetic group on the alpha chain. During this reaction, the Ser that is part of the protease active site of the proenzyme becomes the pyruvoyl prosthetic group, which constitutes an essential element of the active site of the mature decarboxylase.

The protein localises to the cell membrane. The catalysed reaction is a 1,2-diacyl-sn-glycero-3-phospho-L-serine + H(+) = a 1,2-diacyl-sn-glycero-3-phosphoethanolamine + CO2. It functions in the pathway phospholipid metabolism; phosphatidylethanolamine biosynthesis; phosphatidylethanolamine from CDP-diacylglycerol: step 2/2. Catalyzes the formation of phosphatidylethanolamine (PtdEtn) from phosphatidylserine (PtdSer). This is Phosphatidylserine decarboxylase proenzyme from Herminiimonas arsenicoxydans.